A 1049-amino-acid polypeptide reads, in one-letter code: ABC transporter ATM1 (1049 aa).

A mitochondrion-targeting transit peptide spans 1–90 (MRSFYNKCFT…NIFKNKGRLY (90 aa)). Transmembrane regions (helical) follow at residues 357–377 (IFCS…TPIL), 397–419 (IYST…VLSS), 481–501 (VMVF…YILT), 506–526 (YTVS…TTLI), 591–611 (FLNF…MYLT), and 619–639 (IFPF…AMPL). In terms of domain architecture, ABC transmembrane type-1 spans 360-651 (SLFFLLCSKM…FGTIYRETKL (292 aa)). Residues 807 to 1043 (LKNHKIINNS…NHFYREYYDS (237 aa)) enclose the ABC transporter domain. 843-850 (GKSGSGKS) is a binding site for ATP.

This sequence belongs to the ABC transporter superfamily. ABCB family. Heavy Metal importer (TC 3.A.1.210) subfamily. Homodimer. Interacts with ISCU. Interacts with IscA2. Interacts with NBP35. Interacts with mHCF101.

Its subcellular location is the mitochondrion membrane. Its activity is regulated as follows. ATPase activity is stimulated by reduced glutathione. Functionally, transports glutathione-coordinated [4Fe-4S] iron-sulfur clusters in an ATP-dependent manner. Required for optimal parasite growth during erythrocytic stages. The sequence is that of ABC transporter ATM1 from Plasmodium falciparum (isolate 3D7).